Consider the following 112-residue polypeptide: UPF0342 protein SPP_1392 (112 aa).

This sequence belongs to the UPF0342 family.

In Streptococcus pneumoniae (strain P1031), this protein is UPF0342 protein SPP_1392.